We begin with the raw amino-acid sequence, 635 residues long: Extracellular metalloproteinase MEP (635 aa).

Residues 1–19 (MRYSLSLALLGVAAVTVVA) form the signal peptide. Positions 20–242 (HPHTPGRHGV…VHGVVDYVSH (223 aa)) are excised as a propeptide. His-428 contributes to the Zn(2+) binding site. The active site involves Glu-429. His-432 contributes to the Zn(2+) binding site. Residue Asn-473 is glycosylated (N-linked (GlcNAc...) asparagine).

It belongs to the peptidase M36 family. Zn(2+) is required as a cofactor.

The protein localises to the secreted. Functionally, secreted metalloproteinase that allows assimilation of proteinaceous substrates. The polypeptide is Extracellular metalloproteinase MEP (MEP) (Pyricularia oryzae (strain 70-15 / ATCC MYA-4617 / FGSC 8958) (Rice blast fungus)).